The primary structure comprises 272 residues: Zinc transporter ZupT (272 aa).

A run of 8 helical transmembrane segments spans residues 12–32 (ALAVTLAAGLATGLGSLMVVF), 40–60 (LLAFGLAFAGGAMVFVSLSEI), 76–96 (LGFTYGTLTFLGGMLLIMVID), 126–146 (LLTAVAITAHNFPEGLATFFA), 158–178 (AFAIAIHNIPEGIAIAVPVYF), 187–207 (FGASLLSGLAEPIGAGIGYLL), 211–231 (VLSEAVFGAVFGVIAGVMVFL), and 247–267 (HETVYGLVSGMGTLAISLVLF). Fe(2+) contacts are provided by N136 and E139. 2 residues coordinate Zn(2+): E139 and H164. Positions 165, 168, and 197 each coordinate Fe(2+). E168 is a Zn(2+) binding site.

It belongs to the ZIP transporter (TC 2.A.5) family. ZupT subfamily.

Its subcellular location is the cell inner membrane. The catalysed reaction is Zn(2+)(in) = Zn(2+)(out). Functionally, mediates zinc uptake. May also transport other divalent cations. This chain is Zinc transporter ZupT, found in Xanthomonas campestris pv. campestris (strain ATCC 33913 / DSM 3586 / NCPPB 528 / LMG 568 / P 25).